The following is a 697-amino-acid chain: Elongation factor G (697 aa).

Positions 8 to 283 constitute a tr-type G domain; that stretch reads EHIRNIGICA…AVVDFLPSPT (276 aa). GTP is bound by residues 17 to 24, 81 to 85, and 135 to 138; these read AHIDAGKT, DTPGH, and NKMD.

The protein belongs to the TRAFAC class translation factor GTPase superfamily. Classic translation factor GTPase family. EF-G/EF-2 subfamily.

Its subcellular location is the cytoplasm. Functionally, catalyzes the GTP-dependent ribosomal translocation step during translation elongation. During this step, the ribosome changes from the pre-translocational (PRE) to the post-translocational (POST) state as the newly formed A-site-bound peptidyl-tRNA and P-site-bound deacylated tRNA move to the P and E sites, respectively. Catalyzes the coordinated movement of the two tRNA molecules, the mRNA and conformational changes in the ribosome. The sequence is that of Elongation factor G from Rickettsia massiliae (strain Mtu5).